A 232-amino-acid polypeptide reads, in one-letter code: Large ribosomal subunit protein uL1 (232 aa).

This sequence belongs to the universal ribosomal protein uL1 family. In terms of assembly, part of the 50S ribosomal subunit.

Functionally, binds directly to 23S rRNA. The L1 stalk is quite mobile in the ribosome, and is involved in E site tRNA release. In terms of biological role, protein L1 is also a translational repressor protein, it controls the translation of the L11 operon by binding to its mRNA. The protein is Large ribosomal subunit protein uL1 of Chlamydia trachomatis serovar L2 (strain ATCC VR-902B / DSM 19102 / 434/Bu).